A 195-amino-acid chain; its full sequence is Dephospho-CoA kinase (195 aa).

The region spanning 3–195 (KIGLTGGIGS…ANMKNVIAEI (193 aa)) is the DPCK domain. 11–16 (GSGKST) contacts ATP.

Belongs to the CoaE family.

It localises to the cytoplasm. It carries out the reaction 3'-dephospho-CoA + ATP = ADP + CoA + H(+). The protein operates within cofactor biosynthesis; coenzyme A biosynthesis; CoA from (R)-pantothenate: step 5/5. Functionally, catalyzes the phosphorylation of the 3'-hydroxyl group of dephosphocoenzyme A to form coenzyme A. The chain is Dephospho-CoA kinase from Corynebacterium glutamicum (Brevibacterium saccharolyticum).